The sequence spans 1073 residues: Carbamoyl phosphate synthase large chain (1073 aa).

A carboxyphosphate synthetic domain region spans residues 1–403 (MPKRTDIKSI…SLQKALRGLE (403 aa)). ATP is bound by residues arginine 129, arginine 169, glycine 175, glycine 176, glutamate 208, leucine 210, glutamate 215, glycine 241, valine 242, histidine 243, glutamine 285, and glutamate 299. Positions 133–328 (DKAMKSIGLA…IARVAAKLAV (196 aa)) constitute an ATP-grasp 1 domain. Mg(2+) is bound by residues glutamine 285, glutamate 299, and asparagine 301. The Mn(2+) site is built by glutamine 285, glutamate 299, and asparagine 301. Residues 404 to 553 (VGVCGLDPKL…YSTYEEECEA (150 aa)) form an oligomerization domain region. Positions 554-935 (NPSTRDKIMI…AFAKAQMGAS (382 aa)) are carbamoyl phosphate synthetic domain. The region spanning 678-869 (QQMVERLNLR…LAMIAARVMA (192 aa)) is the ATP-grasp 2 domain. 10 residues coordinate ATP: arginine 714, histidine 753, leucine 755, glutamate 760, glycine 785, valine 786, histidine 787, serine 788, glutamine 828, and glutamate 840. Mg(2+) contacts are provided by glutamine 828, glutamate 840, and asparagine 842. Mn(2+) contacts are provided by glutamine 828, glutamate 840, and asparagine 842. The region spanning 936–1073 (EVLPTGGTAF…LQDLHAGLKA (138 aa)) is the MGS-like domain. The interval 936-1073 (EVLPTGGTAF…LQDLHAGLKA (138 aa)) is allosteric domain.

This sequence belongs to the CarB family. Composed of two chains; the small (or glutamine) chain promotes the hydrolysis of glutamine to ammonia, which is used by the large (or ammonia) chain to synthesize carbamoyl phosphate. Tetramer of heterodimers (alpha,beta)4. The cofactor is Mg(2+). It depends on Mn(2+) as a cofactor.

It catalyses the reaction hydrogencarbonate + L-glutamine + 2 ATP + H2O = carbamoyl phosphate + L-glutamate + 2 ADP + phosphate + 2 H(+). The catalysed reaction is hydrogencarbonate + NH4(+) + 2 ATP = carbamoyl phosphate + 2 ADP + phosphate + 2 H(+). It participates in amino-acid biosynthesis; L-arginine biosynthesis; carbamoyl phosphate from bicarbonate: step 1/1. The protein operates within pyrimidine metabolism; UMP biosynthesis via de novo pathway; (S)-dihydroorotate from bicarbonate: step 1/3. Its function is as follows. Large subunit of the glutamine-dependent carbamoyl phosphate synthetase (CPSase). CPSase catalyzes the formation of carbamoyl phosphate from the ammonia moiety of glutamine, carbonate, and phosphate donated by ATP, constituting the first step of 2 biosynthetic pathways, one leading to arginine and/or urea and the other to pyrimidine nucleotides. The large subunit (synthetase) binds the substrates ammonia (free or transferred from glutamine from the small subunit), hydrogencarbonate and ATP and carries out an ATP-coupled ligase reaction, activating hydrogencarbonate by forming carboxy phosphate which reacts with ammonia to form carbamoyl phosphate. The chain is Carbamoyl phosphate synthase large chain from Pseudomonas syringae pv. tomato (strain ATCC BAA-871 / DC3000).